We begin with the raw amino-acid sequence, 103 residues long: MYAVIKTGGKQYKVAAGEKLKIEQIPAEIGSEITLDQVLAVGEGASLKLGDPLVNGAAVMATVVSQGRHDKVTIFKMRRRKHYQKHQGHRQNFTEILINTIKA.

Belongs to the bacterial ribosomal protein bL21 family. As to quaternary structure, part of the 50S ribosomal subunit. Contacts protein L20.

In terms of biological role, this protein binds to 23S rRNA in the presence of protein L20. The sequence is that of Large ribosomal subunit protein bL21 from Polynucleobacter asymbioticus (strain DSM 18221 / CIP 109841 / QLW-P1DMWA-1) (Polynucleobacter necessarius subsp. asymbioticus).